A 579-amino-acid chain; its full sequence is Cytochrome P450 monooxygenase prx9 (579 aa).

The helical transmembrane segment at 6–25 (LPLGSFVGTTLLLFILYKLV) threads the bilayer. N-linked (GlcNAc...) asparagine glycosylation is found at Asn194, Asn292, and Asn390. Cys512 provides a ligand contact to heme.

Belongs to the cytochrome P450 family. Heme serves as cofactor.

The protein localises to the membrane. Its pathway is sesquiterpene biosynthesis. Functionally, cytochrome P450 monooxygenase; part of the gene cluster that mediates the biosynthesis of PR-toxin, a bicyclic sesquiterpene belonging to the eremophilane class and acting as a mycotoxin. The first step of the pathway is catalyzed by the aristolochene synthase which performs the cyclization of trans,trans-farnesyl diphosphate (FPP) to the bicyclic sesquiterpene aristolochene. Following the formation of aristolochene, the non-oxygenated aristolochene is converted to the trioxygenated intermediate eremofortin B, via 7-epi-neopetasone. This conversion appears to involve three enzymes, a hydroxysterol oxidase-like enzyme, the quinone-oxidase prx3 that forms the quinone-type-structure in the bicyclic nucleus of aristolochene with the C8-oxo group and the C-3 hydroxyl group, and the P450 monooxygenase prx9 that introduces the epoxide at the double bond between carbons 1 and 2. No monoxy or dioxy-intermediates have been reported to be released to the broth, so these three early oxidative reactions may be coupled together. Eremofortin B is further oxidized by another P450 monooxygenase, that introduces a second epoxide between carbons 7 and 11 prior to acetylation to eremofortin A by the acetyltransferase prx11. The second epoxidation may be performed by a second P450 monooxygenase. After the acetylation step, eremofortin A is converted to eremofortin C and then to PR-toxin. First the conversion of eremofortin A to eremofortin C proceeds by oxidation of the side chain of the molecule at C-12 and is catalyzed by the short-chain oxidoreductase prx1. The cytochrome P450 monooxygenase prx8 also plays a role in this step. The primary alcohol formed at C-12 is finally oxidized by the short-chain alcohol dehydrogenase prx4 that forms PR-toxin. This chain is Cytochrome P450 monooxygenase prx9, found in Penicillium rubens (strain ATCC 28089 / DSM 1075 / NRRL 1951 / Wisconsin 54-1255) (Penicillium chrysogenum).